The sequence spans 595 residues: Estrogen receptor (595 aa).

Residues 1 to 184 (MTMTLHTKAS…AMESAKETRY (184 aa)) are modulating (transactivation AF-1); mediates interaction with MACROD1. O-linked (GlcNAc) serine glycosylation is present at Ser10. Residues 35-47 (LERPLGEVYVDSS) are required for interaction with NCOA1. The tract at residues 35 to 174 (LERPLGEVYV…LASTSDKGSM (140 aa)) is interaction with DDX5; self-association. Residues Ser104 and Ser106 each carry the phosphoserine; by CDK2 modification. The residue at position 118 (Ser118) is a Phosphoserine. The segment at 144 to 174 (AGPPAFYRPNSDNRRQGGRERLASTSDKGSM) is disordered. Positions 154-165 (SDNRRQGGRERL) are enriched in basic and acidic residues. Ser167 is subject to Phosphoserine; by CK2. NR C4-type zinc fingers lie at residues 185-205 (CAVC…CEGC) and 221-245 (CPAT…LRKC). The segment at residues 185–250 (CAVCNDYASG…RLRKCYEVGM (66 aa)) is a DNA-binding region (nuclear receptor). The interval 185-310 (CAVCNDYASG…TKKNSPVLSL (126 aa)) is mediates interaction with DNTTIP2. The interval 251-310 (MKGGIRKDRRGGRMLKHKRQRDDGEGRNEAVPPGDMRSANLWPSPLLIKHTKKNSPVLSL) is hinge. Over residues 257–269 (KDRRGGRMLKHKR) the composition is skewed to basic residues. The tract at residues 257–288 (KDRRGGRMLKHKRQRDDGEGRNEAVPPGDMRS) is disordered. Arg260 carries the post-translational modification Asymmetric dimethylarginine; by PRMT1. Positions 262 to 595 (GRMLKHKRQR…GEAENFPTTI (334 aa)) are interaction with AKAP13. The segment at 264–594 (MLKHKRQRDD…TGEAENFPTT (331 aa)) is self-association. The region spanning 311–547 (TADQMISALL…DLLLEMLDAH (237 aa)) is the NR LBD domain. The interval 311-594 (TADQMISALL…TGEAENFPTT (284 aa)) is transactivation AF-2. 17beta-estradiol contacts are provided by Glu353 and Arg394. Cys447 is lipidated: S-palmitoyl cysteine. His524 serves as a coordination point for 17beta-estradiol. Phosphotyrosine; by Tyr-kinases is present on Tyr537. The disordered stretch occupies residues 551 to 575 (APTNLGGPPPEDMSQSQLATSGSTP). Positions 563–575 (MSQSQLATSGSTP) are enriched in polar residues.

It belongs to the nuclear hormone receptor family. NR3 subfamily. In terms of assembly, binds DNA as a homodimer. Can form a heterodimer with ESR2. Interacts with coactivator NCOA5. Interacts with PELP1, the interaction is enhanced by 17-beta-estradiol; the interaction increases ESR1 transcriptional activity. Interacts with NCOA7; the interaction is ligand-inducible. Interacts with AKAP13, CUEDC2, HEXIM1, KDM5A, MAP1S, SMARD1, and UBE1C. Interacts with MUC1; the interaction is stimulated by 7 beta-estradiol (E2) and enhances ESR1-mediated transcription. Interacts with DNTTIP2, and UIMC1. Interacts with KMT2D/MLL2. Interacts with ATAD2; the interaction is enhanced by estradiol. Interacts with KIF18A and LDB1. Interacts with RLIM (via its C-terminus). Interacts with MACROD1. Interacts with SH2D4A and PLCG. Interacts with SH2D4A; the interaction blocks binding to PLCG and inhibits estrogen-induced cell proliferation. Interacts with DYNLL1. Interacts with CCDC62; the interaction requires estradiol and appears to enhance the transcription of target genes. Interacts with NR2C1; the interaction prevents homodimerization of ESR1 and suppresses its transcriptional activity and cell growth. Interacts with DNAAF4. Interacts with PRMT2. Interacts with RBFOX2. Interacts with EP300; the interaction is estrogen-dependent and enhanced by CITED1. Interacts with CITED1; the interaction is estrogen-dependent. Interacts with FAM120B, FOXL2, PHB2 and SLC30A9. Interacts with coactivators NCOA3 and NCOA6. Interacts with STK3/MST2 only in the presence of SAV1 and vice-versa. Binds to CSNK1D. Interacts with NCOA2; NCOA2 can interact with ESR1 AF-1 and AF-2 domains simultaneously and mediate their transcriptional synergy. Interacts with DDX5. Interacts with NCOA1; the interaction seems to require a self-association of N-terminal and C-terminal regions. Interacts with ZNF366, DDX17, NFKB1, RELA, SP1 and SP3. Interacts with NRIP1. Interacts with GPER1; the interaction occurs in an estrogen-dependent manner. Interacts with CLOCK and the interaction is stimulated by estrogen. Interacts with TRIP4 (ufmylated); estrogen dependent. Interacts with LMTK3; the interaction phosphorylates ESR1 (in vitro) and protects it against proteasomal degradation. Interacts with CCAR2 (via N-terminus) in a ligand-independent manner. Interacts with ZFHX3. Interacts with SFR1 in a ligand-dependent and -independent manner. Interacts with DCAF13, LATS1 and DCAF1; regulates ESR1 ubiquitination and ubiquitin-mediated proteasomal degradation. Interacts (via DNA-binding domain) with POU4F2 (C-terminus); this interaction increases the estrogen receptor ESR1 transcriptional activity in a DNA- and ligand 17-beta-estradiol-independent manner. Interacts with ESRRB isoform 1. Interacts with UBE3A and WBP2. Interacts with GTF2B. Interacts with RBM39. In the absence of hormonal ligand, interacts with TACC1. Interacts with PI3KR1 or PI3KR2 and PTK2/FAK1. Interacts with SRC. Interacts with BAG1; the interaction is promoted in the absence of estradiol (17-beta-estradiol/E2). Interacts with and ubiquitinated by STUB1; the interaction is promoted in the absence of estradiol (17-beta-estradiol/E2). Interacts with NEDD8. Phosphorylated by cyclin A/CDK2 and CK1. Phosphorylation probably enhances transcriptional activity. Dephosphorylation at Ser-118 by PPP5C inhibits its transactivation activity. Phosphorylated by LMTK3 (in vitro). Post-translationally, ubiquitinated; regulated by LATS1 via DCAF1 it leads to ESR1 proteasomal degradation. Deubiquitinated by OTUB1. Ubiquitinated by STUB1/CHIP; in the CA1 hippocampal region following loss of endogenous circulating estradiol (17-beta-estradiol/E2). Ubiquitinated by UBR5, leading to its degradation: UBR5 specifically recognizes and binds ligand-bound ESR1 when it is not associated with coactivators (NCOAs). In presence of NCOAs, the UBR5-degron is not accessible, preventing its ubiquitination and degradation. In terms of processing, palmitoylated at Cys-447 by ZDHHC7 and ZDHHC21. Palmitoylation is required for plasma membrane targeting and for rapid intracellular signaling via ERK and AKT kinases and cAMP generation, but not for signaling mediated by the nuclear hormone receptor. Dimethylated by PRMT1 at Arg-260. The methylation may favor cytoplasmic localization. Demethylated by JMJD6 at Arg-260.

It is found in the nucleus. It localises to the cytoplasm. The protein resides in the golgi apparatus. Its subcellular location is the cell membrane. Its function is as follows. Nuclear hormone receptor. The steroid hormones and their receptors are involved in the regulation of eukaryotic gene expression and affect cellular proliferation and differentiation in target tissues. Ligand-dependent nuclear transactivation involves either direct homodimer binding to a palindromic estrogen response element (ERE) sequence or association with other DNA-binding transcription factors, such as AP-1/c-Jun, c-Fos, ATF-2, Sp1 and Sp3, to mediate ERE-independent signaling. Ligand binding induces a conformational change allowing subsequent or combinatorial association with multiprotein coactivator complexes through LXXLL motifs of their respective components. Mutual transrepression occurs between the estrogen receptor (ER) and NF-kappa-B in a cell-type specific manner. Decreases NF-kappa-B DNA-binding activity and inhibits NF-kappa-B-mediated transcription from the IL6 promoter and displace RELA/p65 and associated coregulators from the promoter. Recruited to the NF-kappa-B response element of the CCL2 and IL8 promoters and can displace CREBBP. Present with NF-kappa-B components RELA/p65 and NFKB1/p50 on ERE sequences. Can also act synergistically with NF-kappa-B to activate transcription involving respective recruitment adjacent response elements; the function involves CREBBP. Can activate the transcriptional activity of TFF1. Also mediates membrane-initiated estrogen signaling involving various kinase cascades. Essential for MTA1-mediated transcriptional regulation of BRCA1 and BCAS3. Maintains neuronal survival in response to ischemic reperfusion injury when in the presence of circulating estradiol (17-beta-estradiol/E2). The protein is Estrogen receptor (ESR1) of Sus scrofa (Pig).